Reading from the N-terminus, the 173-residue chain is Myosin light chain 5 (173 aa).

Positions 1 to 20 (MASRKTKKKEGGALRAQRAS) are disordered. EF-hand domains follow at residues 30–65 (TQIQEFKEAFTLMDQNRDGFIDKEDLKDTYASLGKT), 100–135 (DAEETILNAFKMLDPDGKGKINKEYIKRLLMSQADK), and 136–171 (MTAEEVDQMFQFASIDVAGNLDYKALSYVITHGEEK). The Ca(2+) site is built by Asp-43, Asn-45, Asp-47, and Asp-54.

As to quaternary structure, myosin is a hexamer of 2 heavy chains and 4 light chains. In terms of tissue distribution, expressed in fetal skeletal muscle and retina.

This chain is Myosin light chain 5 (MYL5), found in Homo sapiens (Human).